Reading from the N-terminus, the 436-residue chain is UPF0761 membrane protein Bxeno_A3061 (436 aa).

6 helical membrane passes run 42-62 (LVPL…FASF), 96-116 (GLTT…MMTV), 136-156 (ILVY…SLSI), 180-200 (ALAG…YVYL), 210-230 (AVIG…GFGY), and 241-261 (VYGA…CWFI).

Belongs to the UPF0761 family.

It localises to the cell inner membrane. In Paraburkholderia xenovorans (strain LB400), this protein is UPF0761 membrane protein Bxeno_A3061.